The sequence spans 364 residues: Probable protein disulfide-isomerase A6 (364 aa).

Positions 1–28 (MKMEMHQIWSRIALASFAFAILFVSVSA) are cleaved as a signal peptide. Thioredoxin domains are found at residues 29–137 (DDVV…TEGG) and 139–256 (NVKI…EKSG). Active-site nucleophile residues include Cys-58, Cys-61, Cys-177, and Cys-180. 2 cysteine pairs are disulfide-bonded: Cys-58–Cys-61 and Cys-177–Cys-180.

It belongs to the protein disulfide isomerase family.

The protein localises to the endoplasmic reticulum lumen. It carries out the reaction Catalyzes the rearrangement of -S-S- bonds in proteins.. The chain is Probable protein disulfide-isomerase A6 from Medicago sativa (Alfalfa).